Here is a 185-residue protein sequence, read N- to C-terminus: Urease accessory protein UreE (185 aa).

Residues 153 to 185 (LRANSAQGHGHSHSHSHDHHGYHHHGDGHWHKH) form a disordered region. Positions 162–175 (GHSHSHSHDHHGYH) are enriched in basic residues. Positions 176-185 (HHGDGHWHKH) are enriched in basic and acidic residues.

It belongs to the UreE family.

It localises to the cytoplasm. Functionally, involved in urease metallocenter assembly. Binds nickel. Probably functions as a nickel donor during metallocenter assembly. The protein is Urease accessory protein UreE of Haemophilus influenzae (strain PittEE).